The following is a 130-amino-acid chain: Methylglyoxal synthase (130 aa).

The MGS-like domain occupies 1 to 130; that stretch reads MSKPRIALIA…DLARNMQDVC (130 aa). Substrate-binding positions include H11, K15, 37-40, and 57-58; these read TGTT and SG. The active-site Proton donor/acceptor is the D63. H90 serves as a coordination point for substrate.

It belongs to the methylglyoxal synthase family.

It catalyses the reaction dihydroxyacetone phosphate = methylglyoxal + phosphate. Functionally, catalyzes the formation of methylglyoxal from dihydroxyacetone phosphate. This Burkholderia orbicola (strain AU 1054) protein is Methylglyoxal synthase.